The sequence spans 248 residues: 5'-nucleotidase SurE (248 aa).

Residues D8, D9, S39, and N91 each contribute to the a divalent metal cation site.

This sequence belongs to the SurE nucleotidase family. The cofactor is a divalent metal cation.

It localises to the cytoplasm. The enzyme catalyses a ribonucleoside 5'-phosphate + H2O = a ribonucleoside + phosphate. In terms of biological role, nucleotidase that shows phosphatase activity on nucleoside 5'-monophosphates. This chain is 5'-nucleotidase SurE, found in Neisseria meningitidis serogroup C (strain 053442).